We begin with the raw amino-acid sequence, 178 residues long: V-type proton ATPase subunit c''2 (178 aa).

Residues 1–24 are Lumenal-facing; the sequence is MSGVAIHASSWGAALVRISPYTFS. The chain crosses the membrane as a helical span at residues 25 to 45; the sequence is AIGIAISIGVSVLGAAWGIYI. The Cytoplasmic portion of the chain corresponds to 46–64; the sequence is TGSSLIGAAIEAPRITSKN. Residues 65–85 traverse the membrane as a helical segment; sequence LISVIFCEAVAIYGVIVAIIL. At 86-108 the chain is on the lumenal side; it reads QTKLESVPSSKMYDAESLRAGYA. The chain crosses the membrane as a helical span at residues 109-129; the sequence is IFASGIIVGFANLVCGLCVGI. Over 130-147 the chain is Cytoplasmic; the sequence is IGSSCALSDAQNSTLFVK. The chain crosses the membrane as a helical span at residues 148-168; the sequence is ILVIEIFGSALGLFGVIVGII. Over 169–178 the chain is Lumenal; that stretch reads MSAQATWPTK.

This sequence belongs to the V-ATPase proteolipid subunit family. In terms of assembly, V-ATPase is a heteromultimeric enzyme composed of a peripheral catalytic V1 complex (components A to H) attached to an integral membrane V0 proton pore complex (components: a, c, c'', d and e). The proteolipid components c and c'' are present as a hexameric ring that forms the proton-conducting pore. Interacts with APD2.

It localises to the endoplasmic reticulum membrane. Its subcellular location is the golgi apparatus membrane. Proton-conducting pore forming subunit of the membrane integral V0 complex of vacuolar ATPase. V-ATPase is responsible for acidifying a variety of intracellular compartments in eukaryotic cells. The chain is V-type proton ATPase subunit c''2 (VHA-c''2) from Arabidopsis thaliana (Mouse-ear cress).